The sequence spans 413 residues: CinA-like protein (413 aa).

Belongs to the CinA family.

The sequence is that of CinA-like protein from Geotalea daltonii (strain DSM 22248 / JCM 15807 / FRC-32) (Geobacter daltonii).